The following is a 311-amino-acid chain: L-lactate dehydrogenase 2 (311 aa).

Residues Val14, Asp35, and Arg40 each contribute to the NAD(+) site. Substrate is bound by residues Arg90 and 122-125 (NPCD). Residues 120 to 122 (ATN) and Thr145 each bind NAD(+). Position 150 to 153 (150 to 153 (DTTR)) interacts with substrate. Residue His177 is the Proton acceptor of the active site. Substrate is bound at residue Thr230.

It belongs to the LDH/MDH superfamily. LDH family. As to quaternary structure, homotetramer.

The protein localises to the cytoplasm. It catalyses the reaction (S)-lactate + NAD(+) = pyruvate + NADH + H(+). It functions in the pathway fermentation; pyruvate fermentation to lactate; (S)-lactate from pyruvate: step 1/1. Catalyzes the conversion of lactate to pyruvate. In Listeria monocytogenes serovar 1/2a (strain ATCC BAA-679 / EGD-e), this protein is L-lactate dehydrogenase 2.